The following is a 205-amino-acid chain: Thiamine-phosphate synthase (205 aa).

Residues 35–39 and Asn67 each bind 4-amino-2-methyl-5-(diphosphooxymethyl)pyrimidine; that span reads QYRDK. Asp68 and Asp86 together coordinate Mg(2+). Residue Thr105 participates in 4-amino-2-methyl-5-(diphosphooxymethyl)pyrimidine binding. Position 132 to 134 (132 to 134) interacts with 2-[(2R,5Z)-2-carboxy-4-methylthiazol-5(2H)-ylidene]ethyl phosphate; that stretch reads SLT. Lys135 contacts 4-amino-2-methyl-5-(diphosphooxymethyl)pyrimidine. Gly162 contacts 2-[(2R,5Z)-2-carboxy-4-methylthiazol-5(2H)-ylidene]ethyl phosphate.

The protein belongs to the thiamine-phosphate synthase family. Mg(2+) serves as cofactor.

It catalyses the reaction 2-[(2R,5Z)-2-carboxy-4-methylthiazol-5(2H)-ylidene]ethyl phosphate + 4-amino-2-methyl-5-(diphosphooxymethyl)pyrimidine + 2 H(+) = thiamine phosphate + CO2 + diphosphate. The enzyme catalyses 2-(2-carboxy-4-methylthiazol-5-yl)ethyl phosphate + 4-amino-2-methyl-5-(diphosphooxymethyl)pyrimidine + 2 H(+) = thiamine phosphate + CO2 + diphosphate. The catalysed reaction is 4-methyl-5-(2-phosphooxyethyl)-thiazole + 4-amino-2-methyl-5-(diphosphooxymethyl)pyrimidine + H(+) = thiamine phosphate + diphosphate. Its pathway is cofactor biosynthesis; thiamine diphosphate biosynthesis; thiamine phosphate from 4-amino-2-methyl-5-diphosphomethylpyrimidine and 4-methyl-5-(2-phosphoethyl)-thiazole: step 1/1. Condenses 4-methyl-5-(beta-hydroxyethyl)thiazole monophosphate (THZ-P) and 2-methyl-4-amino-5-hydroxymethyl pyrimidine pyrophosphate (HMP-PP) to form thiamine monophosphate (TMP). The protein is Thiamine-phosphate synthase of Pseudomonas syringae pv. syringae (strain B728a).